A 334-amino-acid chain; its full sequence is MSGSVAVTRAIAVPGLLLLLIIATALSLLIGAKSLPASVVLEAFSGTCQSADCTIVLDARLPRTLAGLLAGGALGLAGALMQTLTRNPLADPGLLGVNAGASFAIVLGAALFGYSSAQEQLAMAFAGALVASLIVAFTGSQGGGQLSPVRLTLAGVALAAVLEGLTSGIALLNPDVYDQLRFWQAGSLDIRNLHTLKVVLIPVLIAGATALLLSRALNSLSLGSDTATALGSRVARTQLIGLLAITVLCGSATAIVGPIAFIGLMMPHMARWLVGADHRWSLPVTLLATPALLLFADIIGRVIVPGELRVSVVSAFIGAPVLIFLVRRKTRGGA.

Topologically, residues 1-9 are periplasmic; it reads MSGSVAVTR. A helical transmembrane segment spans residues 10 to 30; it reads AIAVPGLLLLLIIATALSLLI. At 31 to 63 the chain is on the cytoplasmic side; the sequence is GAKSLPASVVLEAFSGTCQSADCTIVLDARLPR. Residues 64-84 traverse the membrane as a helical segment; the sequence is TLAGLLAGGALGLAGALMQTL. Topologically, residues 85 to 92 are periplasmic; the sequence is TRNPLADP. The helical transmembrane segment at 93 to 113 threads the bilayer; the sequence is GLLGVNAGASFAIVLGAALFG. Residues 114–120 lie on the Cytoplasmic side of the membrane; it reads YSSAQEQ. Residues 121 to 141 traverse the membrane as a helical segment; the sequence is LAMAFAGALVASLIVAFTGSQ. Topologically, residues 142–151 are periplasmic; the sequence is GGGQLSPVRL. Residues 152–172 form a helical membrane-spanning segment; the sequence is TLAGVALAAVLEGLTSGIALL. Topologically, residues 173–192 are cytoplasmic; the sequence is NPDVYDQLRFWQAGSLDIRN. Residues 193 to 213 form a helical membrane-spanning segment; it reads LHTLKVVLIPVLIAGATALLL. Residues 214-241 are Periplasmic-facing; the sequence is SRALNSLSLGSDTATALGSRVARTQLIG. A helical membrane pass occupies residues 242-262; it reads LLAITVLCGSATAIVGPIAFI. The Cytoplasmic segment spans residues 263-279; the sequence is GLMMPHMARWLVGADHR. A helical transmembrane segment spans residues 280-300; sequence WSLPVTLLATPALLLFADIIG. Over 301–305 the chain is Periplasmic; the sequence is RVIVP. Residues 306–326 traverse the membrane as a helical segment; the sequence is GELRVSVVSAFIGAPVLIFLV. The Cytoplasmic portion of the chain corresponds to 327–334; that stretch reads RRKTRGGA.

It belongs to the binding-protein-dependent transport system permease family. FecCD subfamily. The complex is composed of two ATP-binding proteins (FepC), two transmembrane proteins (FepD and FepG) and a solute-binding protein (FepB).

Its subcellular location is the cell inner membrane. Functionally, part of the ABC transporter complex FepBDGC involved in ferric enterobactin uptake. Responsible for the translocation of the substrate across the membrane. The polypeptide is Ferric enterobactin transport system permease protein FepD (fepD) (Escherichia coli (strain K12)).